The sequence spans 439 residues: MSQDLIETTATTTKIVEARELGHQIHDSLLEQLKLQQEELLQQQRDLFFQEQQLQLQQQVTQPVSNNGNTWSFTQGLVIGQVSVIFIIIVFVKFFVFADSSSHIPTKPGLDGAIGVIVKRNKNKKHSNGQFANDGENEDDTSLDSNQSKISSILEKTYYDVNNHASESLDWFNVLVAQTISQLRSEALLKDNIYHSLNNFLTNAKLPDFIDTINLTEIDIGDDFPIFSNCRIKYGEDLKRLEAKIDVDLSDTLTLGIATKLLLNQPRPLTAVLPVSLTVSIVRFSGCLTVSLINTKDIDLKNVDKTSNMNGYSKENANGDGASSSNNDEDEDDGGTALMFSFSPDYRLEFIVKSLIGSRAKLQDVPKISSLIENQLRTWFIERCVEPRFQVVRLPSLWPRTKNTREPVTKKTTTTPSTTVNGTSAATITTPGEYVNSNI.

At 1-76 (MSQDLIETTA…NGNTWSFTQG (76 aa)) the chain is on the lumenal side. Residues 77–97 (LVIGQVSVIFIIIVFVKFFVF) form a helical membrane-spanning segment. Residues 98–439 (ADSSSHIPTK…TPGEYVNSNI (342 aa)) are Cytoplasmic-facing. Disordered regions lie at residues 125 to 145 (KHSN…SLDS), 309 to 336 (MNGY…DGGT), and 405 to 425 (REPV…GTSA). Positions 165 to 395 (ASESLDWFNV…EPRFQVVRLP (231 aa)) constitute an SMP-LTD domain. Low complexity-rich tracts occupy residues 315–326 (ENANGDGASSSN) and 410–424 (KKTT…NGTS).

This sequence belongs to the MMM1 family. Homodimer. Component of the ER-mitochondria encounter structure (ERMES) or MDM complex, composed of MMM1, MDM10, MDM12 and MDM34. An MMM1 homodimer associates with one molecule of MDM12 on each side in a pairwise head-to-tail manner, and the SMP-LTD domains of MMM1 and MDM12 generate a continuous hydrophobic tunnel for phospholipid trafficking.

The protein resides in the endoplasmic reticulum membrane. In terms of biological role, component of the ERMES/MDM complex, which serves as a molecular tether to connect the endoplasmic reticulum (ER) and mitochondria. Components of this complex are involved in the control of mitochondrial shape and protein biogenesis, and function in nonvesicular lipid trafficking between the ER and mitochondria. The MDM12-MMM1 subcomplex functions in the major beta-barrel assembly pathway that is responsible for biogenesis of all outer membrane beta-barrel proteins, and acts in a late step after the SAM complex. The MDM10-MDM12-MMM1 subcomplex further acts in the TOM40-specific pathway after the action of the MDM12-MMM1 complex. Essential for establishing and maintaining the structure of mitochondria and maintenance of mtDNA nucleoids. The protein is Maintenance of mitochondrial morphology protein 1 of Candida albicans (strain WO-1) (Yeast).